The chain runs to 353 residues: Photosystem II D2 protein (353 aa).

At Thr-2 the chain carries N-acetylthreonine. Thr-2 bears the Phosphothreonine mark. The helical transmembrane segment at 41-61 threads the bilayer; that stretch reads CAYFALGGWLTGTTFVTSWYT. A chlorophyll a-binding site is contributed by His-118. The helical transmembrane segment at 125-141 threads the bilayer; the sequence is GFMLRQFELARSVQLRP. 2 residues coordinate pheophytin a: Gln-130 and Asn-143. The chain crosses the membrane as a helical span at residues 153 to 166; that stretch reads VFVSVFLIYPLGQS. His-198 serves as a coordination point for chlorophyll a. The helical transmembrane segment at 208 to 228 threads the bilayer; that stretch reads AALLCAIHGATVENTLFEDGD. A plastoquinone-binding residues include His-215 and Phe-262. His-215 contributes to the Fe cation binding site. His-269 is a binding site for Fe cation. A helical transmembrane segment spans residues 279 to 295; that stretch reads GLWMSAIGVVGLALNLR.

Belongs to the reaction center PufL/M/PsbA/D family. As to quaternary structure, PSII is composed of 1 copy each of membrane proteins PsbA, PsbB, PsbC, PsbD, PsbE, PsbF, PsbH, PsbI, PsbJ, PsbK, PsbL, PsbM, PsbT, PsbX, PsbY, PsbZ, Psb30/Ycf12, at least 3 peripheral proteins of the oxygen-evolving complex and a large number of cofactors. It forms dimeric complexes. Requires The D1/D2 heterodimer binds P680, chlorophylls that are the primary electron donor of PSII, and subsequent electron acceptors. It shares a non-heme iron and each subunit binds pheophytin, quinone, additional chlorophylls, carotenoids and lipids. There is also a Cl(-1) ion associated with D1 and D2, which is required for oxygen evolution. The PSII complex binds additional chlorophylls, carotenoids and specific lipids. as cofactor.

The protein resides in the plastid. Its subcellular location is the chloroplast thylakoid membrane. The enzyme catalyses 2 a plastoquinone + 4 hnu + 2 H2O = 2 a plastoquinol + O2. In terms of biological role, photosystem II (PSII) is a light-driven water:plastoquinone oxidoreductase that uses light energy to abstract electrons from H(2)O, generating O(2) and a proton gradient subsequently used for ATP formation. It consists of a core antenna complex that captures photons, and an electron transfer chain that converts photonic excitation into a charge separation. The D1/D2 (PsbA/PsbD) reaction center heterodimer binds P680, the primary electron donor of PSII as well as several subsequent electron acceptors. D2 is needed for assembly of a stable PSII complex. This is Photosystem II D2 protein from Zygnema circumcarinatum (Green alga).